The sequence spans 323 residues: Nucleotide-binding protein ZMO1325 (323 aa).

25–32 is a binding site for ATP; that stretch reads GLSGAGKS. 78-81 is a binding site for GTP; that stretch reads DSRT.

This sequence belongs to the RapZ-like family.

In terms of biological role, displays ATPase and GTPase activities. The protein is Nucleotide-binding protein ZMO1325 of Zymomonas mobilis subsp. mobilis (strain ATCC 31821 / ZM4 / CP4).